Consider the following 369-residue polypeptide: Beta-1,4-galactosyltransferase 2 (369 aa).

At methionine 1–alanine 15 the chain is on the cytoplasmic side. A helical; Signal-anchor for type II membrane protein membrane pass occupies residues valine 16–alanine 36. Topologically, residues glutamine 37 to glycine 369 are lumenal. Over residues serine 59–glycine 75 the composition is skewed to polar residues. Residues serine 59–valine 90 are disordered. N-linked (GlcNAc...) asparagine glycosylation is found at asparagine 63 and asparagine 68. Residues cysteine 94 and cysteine 136 are joined by a disulfide bond. Residues proline 147–arginine 151, phenylalanine 186–arginine 188, valine 214–aspartate 215, and tryptophan 275 contribute to the UDP-alpha-D-galactose site. Cysteine 208 and cysteine 227 are disulfide-bonded. Position 215 (aspartate 215) interacts with Mn(2+). Glycine 277 to aspartate 280 contributes to the N-acetyl-D-glucosamine binding site. A Mn(2+)-binding site is contributed by histidine 308. Position 308 to 310 (histidine 308 to arginine 310) interacts with UDP-alpha-D-galactose. Position 320 (arginine 320) interacts with N-acetyl-D-glucosamine. N-linked (GlcNAc...) asparagine glycosylation is present at asparagine 354.

This sequence belongs to the glycosyltransferase 7 family. It depends on Mn(2+) as a cofactor.

Its subcellular location is the golgi apparatus. The protein resides in the golgi stack membrane. The catalysed reaction is D-glucose + UDP-alpha-D-galactose = lactose + UDP + H(+). It carries out the reaction an N-acetyl-beta-D-glucosaminyl derivative + UDP-alpha-D-galactose = a beta-D-galactosyl-(1-&gt;4)-N-acetyl-beta-D-glucosaminyl derivative + UDP + H(+). The enzyme catalyses N-acetyl-D-glucosamine + UDP-alpha-D-galactose = beta-D-galactosyl-(1-&gt;4)-N-acetyl-D-glucosamine + UDP + H(+). It functions in the pathway protein modification; protein glycosylation. In terms of biological role, responsible for the synthesis of complex-type N-linked oligosaccharides in many glycoproteins as well as the carbohydrate moieties of glycolipids. Can produce lactose. This chain is Beta-1,4-galactosyltransferase 2 (B4GALT2), found in Cricetulus griseus (Chinese hamster).